A 287-amino-acid polypeptide reads, in one-letter code: Uroporphyrinogen-III C-methyltransferase (287 aa).

Residues M1–A10 show a composition bias toward polar residues. Residues M1–V24 form a disordered region. S-adenosyl-L-methionine-binding positions include P40, G116 to D118, T146, and M199.

Belongs to the precorrin methyltransferase family.

It catalyses the reaction uroporphyrinogen III + 2 S-adenosyl-L-methionine = precorrin-2 + 2 S-adenosyl-L-homocysteine + H(+). It functions in the pathway porphyrin-containing compound metabolism; siroheme biosynthesis; precorrin-2 from uroporphyrinogen III: step 1/1. In terms of biological role, catalyzes the methylation of both C-2 and C-7 of uroporphyrinogen III leading to precorrin-1 and precorrin-2; their oxidative esterification gives respectively factor I octamethyl ester and sirohydrochlorin. Inactivation of uroporphyrinogen-III methyltransferase results in the loss of nitrite and nitric oxide reductase activities, but not of nitrous oxide reductase activity. Likely involved in heme D1 biosynthesis. This Paracoccus denitrificans (strain Pd 1222) protein is Uroporphyrinogen-III C-methyltransferase (nirE).